The chain runs to 251 residues: Probable transcriptional regulatory protein cbdbA400 (251 aa).

It belongs to the TACO1 family.

The protein localises to the cytoplasm. The sequence is that of Probable transcriptional regulatory protein cbdbA400 from Dehalococcoides mccartyi (strain CBDB1).